The chain runs to 305 residues: GTPase Era (305 aa).

An Era-type G domain is found at 13–181 (RCGFVAIVGR…ESAVGRFLPE (169 aa)). Positions 21-28 (GRPNVGKS) are G1. 21–28 (GRPNVGKS) lines the GTP pocket. The tract at residues 47-51 (QTTRH) is G2. A G3 region spans residues 68–71 (DTPG). GTP is bound by residues 68–72 (DTPGM) and 130–133 (NKVD). The tract at residues 130–133 (NKVD) is G4. Residues 160 to 162 (LSA) are G5. Residues 204–288 (VREKITRQLG…MLRLWVKVKR (85 aa)) enclose the KH type-2 domain.

Belongs to the TRAFAC class TrmE-Era-EngA-EngB-Septin-like GTPase superfamily. Era GTPase family. In terms of assembly, monomer.

The protein resides in the cytoplasm. The protein localises to the cell inner membrane. In terms of biological role, an essential GTPase that binds both GDP and GTP, with rapid nucleotide exchange. Plays a role in 16S rRNA processing and 30S ribosomal subunit biogenesis and possibly also in cell cycle regulation and energy metabolism. This is GTPase Era from Marinobacter nauticus (strain ATCC 700491 / DSM 11845 / VT8) (Marinobacter aquaeolei).